Consider the following 186-residue polypeptide: Peptidyl-tRNA hydrolase (186 aa).

Tyr-14 provides a ligand contact to tRNA. His-19 acts as the Proton acceptor in catalysis. Residues Tyr-64, Asn-66, and Asn-112 each contribute to the tRNA site.

This sequence belongs to the PTH family. As to quaternary structure, monomer.

The protein localises to the cytoplasm. The catalysed reaction is an N-acyl-L-alpha-aminoacyl-tRNA + H2O = an N-acyl-L-amino acid + a tRNA + H(+). Hydrolyzes ribosome-free peptidyl-tRNAs (with 1 or more amino acids incorporated), which drop off the ribosome during protein synthesis, or as a result of ribosome stalling. In terms of biological role, catalyzes the release of premature peptidyl moieties from peptidyl-tRNA molecules trapped in stalled 50S ribosomal subunits, and thus maintains levels of free tRNAs and 50S ribosomes. The chain is Peptidyl-tRNA hydrolase from Bacillus cereus (strain Q1).